Reading from the N-terminus, the 97-residue chain is Large ribosomal subunit protein bL31 (97 aa).

The disordered stretch occupies residues 76-97 (KTPKKAKGKTEEYTKHRSLNEL). Basic and acidic residues predominate over residues 83-97 (GKTEEYTKHRSLNEL).

It belongs to the bacterial ribosomal protein bL31 family. Type A subfamily. Part of the 50S ribosomal subunit.

Binds the 23S rRNA. The sequence is that of Large ribosomal subunit protein bL31 from Mycoplasma pneumoniae (strain ATCC 29342 / M129 / Subtype 1) (Mycoplasmoides pneumoniae).